Here is a 283-residue protein sequence, read N- to C-terminus: Isochorismatase domain-containing protein 1 (283 aa).

This sequence belongs to the isochorismatase family.

The chain is Isochorismatase domain-containing protein 1 (isoc1) from Danio rerio (Zebrafish).